The sequence spans 206 residues: Thymidylate kinase (206 aa).

11 to 18 (GIDGAGKT) provides a ligand contact to ATP.

Belongs to the thymidylate kinase family.

The catalysed reaction is dTMP + ATP = dTDP + ADP. Its function is as follows. Phosphorylation of dTMP to form dTDP in both de novo and salvage pathways of dTTP synthesis. The polypeptide is Thymidylate kinase (Paraburkholderia xenovorans (strain LB400)).